The following is a 734-amino-acid chain: Photosystem I P700 chlorophyll a apoprotein A2 (734 aa).

The next 8 membrane-spanning stretches (helical) occupy residues I46–A69, L135–Q158, L175–I199, M273–Y291, L330–Y353, A369–I395, A417–H439, and F517–V535. [4Fe-4S] cluster is bound by residues C559 and C568. 2 helical membrane-spanning segments follow: residues A575 to W596 and L643 to I665. Chlorophyll a contacts are provided by H654, M662, and Y670. Position 671 (W671) interacts with phylloquinone. The helical transmembrane segment at L707–A727 threads the bilayer.

It belongs to the PsaA/PsaB family. In terms of assembly, the PsaA/B heterodimer binds the P700 chlorophyll special pair and subsequent electron acceptors. PSI consists of a core antenna complex that captures photons, and an electron transfer chain that converts photonic excitation into a charge separation. The eukaryotic PSI reaction center is composed of at least 11 subunits. P700 is a chlorophyll a/chlorophyll a' dimer, A0 is one or more chlorophyll a, A1 is one or both phylloquinones and FX is a shared 4Fe-4S iron-sulfur center. is required as a cofactor.

Its subcellular location is the plastid. It is found in the chloroplast thylakoid membrane. It catalyses the reaction reduced [plastocyanin] + hnu + oxidized [2Fe-2S]-[ferredoxin] = oxidized [plastocyanin] + reduced [2Fe-2S]-[ferredoxin]. In terms of biological role, psaA and PsaB bind P700, the primary electron donor of photosystem I (PSI), as well as the electron acceptors A0, A1 and FX. PSI is a plastocyanin-ferredoxin oxidoreductase, converting photonic excitation into a charge separation, which transfers an electron from the donor P700 chlorophyll pair to the spectroscopically characterized acceptors A0, A1, FX, FA and FB in turn. Oxidized P700 is reduced on the lumenal side of the thylakoid membrane by plastocyanin. This is Photosystem I P700 chlorophyll a apoprotein A2 from Pinus koraiensis (Korean pine).